The sequence spans 468 residues: ERO1-like protein alpha (468 aa).

A signal peptide spans 1 to 23 (MGRRWGFLIGFLVAVGLLGLGHG). Disulfide bonds link cysteine 35-cysteine 48, cysteine 37-cysteine 46, cysteine 85-cysteine 391, cysteine 94-cysteine 99, cysteine 94-cysteine 131, cysteine 99-cysteine 104, cysteine 208-cysteine 241, and cysteine 394-cysteine 397. Phosphoserine occurs at positions 106, 143, and 145. Arginine 187, threonine 189, and tryptophan 200 together coordinate FAD. Residues serine 252 and histidine 255 each contribute to the FAD site. Asparagine 280 carries N-linked (GlcNAc...) asparagine glycosylation. 2 residues coordinate FAD: arginine 287 and arginine 300. N-linked (GlcNAc...) asparagine glycosylation occurs at asparagine 384.

This sequence belongs to the EROs family. Predominantly monomer. May function both as a monomer and a homodimer. Interacts with PDILT. Interacts with ERP44; the interaction results in retention of ERO1A in the endoplasmic reticulum. Requires FAD as cofactor. The Cys-94/Cys-99 and Cys-394/Cys-397 disulfide bonds constitute the redox-active center. The Cys-94/Cys-99 disulfide bond may accept electron from P4HB and funnel them to the active site disulfide Cys-394/Cys-397. The regulatory Cys-99/Cys-104 disulfide bond stabilizes the other regulatory bond Cys-94/Cys-131. Post-translationally, phosphorylated on Ser-145 by FAM20C in the Golgi which increases its enzymatic activity. Phosphorylation is induced by lactation. It is also induced by hypoxia and reductive stress.

The protein resides in the endoplasmic reticulum membrane. The protein localises to the golgi apparatus lumen. It localises to the secreted. It is found in the cell projection. Its subcellular location is the dendrite. With respect to regulation, enzyme activity is tightly regulated to prevent the accumulation of reactive oxygen species in the endoplasmic reticulum. Reversibly down-regulated by the formation of disulfide bonds between the active site Cys-94 and Cys-131, and between Cys-99 and Cys-104. Glutathione may be required to regulate its activity in the endoplasmic reticulum. Functionally, oxidoreductase involved in disulfide bond formation in the endoplasmic reticulum. Efficiently reoxidizes P4HB/PDI, the enzyme catalyzing protein disulfide formation, in order to allow P4HB to sustain additional rounds of disulfide formation. Following P4HB reoxidation, passes its electrons to molecular oxygen via FAD, leading to the production of reactive oxygen species (ROS) in the cell. Required for the proper folding of immunoglobulins. Plays an important role in ER stress-induced, CHOP-dependent apoptosis by activating the inositol 1,4,5-trisphosphate receptor IP3R1. In Bos taurus (Bovine), this protein is ERO1-like protein alpha.